Reading from the N-terminus, the 587-residue chain is Lamin-B1 (587 aa).

Residues 1 to 11 (MATATPVQQRA) show a composition bias toward polar residues. Positions 1-29 (MATATPVQQRAGSRASAPATPFSPTRLSR) are disordered. Position 2 is an N-acetylalanine (Ala2). The tract at residues 2 to 34 (ATATPVQQRAGSRASAPATPFSPTRLSRLQEKE) is head. A phosphothreonine mark is found at Thr3 and Thr5. Residue Arg14 is modified to Omega-N-methylarginine. At Ser16 the chain carries Phosphoserine. A Phosphothreonine modification is found at Thr20. Ser23 carries the phosphoserine modification. The residue at position 25 (Thr25) is a Phosphothreonine. Ser28 carries the post-translational modification Phosphoserine. An IF rod domain is found at 32-388 (EKEELRELND…KLLEGEEERL (357 aa)). The interval 35–69 (ELRELNDRLAVYIDKVRSLETENSALQLQVTEREE) is coil 1A. The linker 1 stretch occupies residues 70–81 (VRGRELTGLKAL). The interval 82–215 (YETELADARR…EFRKNMYEEE (134 aa)) is coil 1B. A Glycyl lysine isopeptide (Lys-Gly) (interchain with G-Cter in SUMO2) cross-link involves residue Lys102. Lys111 carries the N6-acetyllysine modification. Lys123 participates in a covalent cross-link: Glycyl lysine isopeptide (Lys-Gly) (interchain with G-Cter in SUMO2). Ser126 carries the post-translational modification Phosphoserine. Residue Lys145 forms a Glycyl lysine isopeptide (Lys-Gly) (interchain with G-Cter in SUMO2) linkage. Lys157 carries the post-translational modification N6-acetyllysine; alternate. A Glycyl lysine isopeptide (Lys-Gly) (interchain with G-Cter in SUMO2); alternate cross-link involves residue Lys157. A Phosphoserine modification is found at Ser158. Lys181 is covalently cross-linked (Glycyl lysine isopeptide (Lys-Gly) (interchain with G-Cter in SUMO2)). Residues Ser200 and Ser232 each carry the phosphoserine modification. Positions 216–243 (INETRRKHETRLVEVDSGRQIEYEYKLA) are linker 2. Glycyl lysine isopeptide (Lys-Gly) (interchain with G-Cter in SUMO2) cross-links involve residues Lys241 and Lys261. The tract at residues 244-386 (QALHEMREQH…YRKLLEGEEE (143 aa)) is coil 2. Residue Lys271 is modified to N6-acetyllysine; alternate. Lys271 is covalently cross-linked (Glycyl lysine isopeptide (Lys-Gly) (interchain with G-Cter in SUMO2); alternate). Residues Ser278 and Ser302 each carry the phosphoserine modification. Residue Lys312 forms a Glycyl lysine isopeptide (Lys-Gly) (interchain with G-Cter in SUMO2) linkage. Lys330 bears the N6-acetyllysine; alternate mark. Lys330 participates in a covalent cross-link: Glycyl lysine isopeptide (Lys-Gly) (interchain with G-Cter in SUMO2); alternate. Ser375 and Ser393 each carry phosphoserine. A tail region spans residues 387 to 587 (RLKLSPSPSS…RASNKSCAIM (201 aa)). Residues 390-409 (LSPSPSSRVTVSRASSSRSV) show a composition bias toward low complexity. Residues 390-432 (LSPSPSSRVTVSRASSSRSVRTTRGKRKRVDVEESEASSSVSI) form a disordered region. The O-linked (GlcNAc) threonine glycan is linked to Thr399. The residue at position 413 (Arg413) is an Omega-N-methylarginine. A Nuclear localization signal motif is present at residues 415–420 (KRKRVD). The 117-residue stretch at 430 to 546 (VSISHSASAT…EEVAQRSTVF (117 aa)) folds into the LTD domain. The residue at position 483 (Lys483) is an N6-acetyllysine. Lys532 is covalently cross-linked (Glycyl lysine isopeptide (Lys-Gly) (interchain with G-Cter in SUMO2)). Ser534 carries the post-translational modification Phosphoserine. Lys547 is covalently cross-linked (Glycyl lysine isopeptide (Lys-Gly) (interchain with G-Cter in SUMO2)). The segment at 550–587 (IPEEEEEEEEEPIGVPLEEERFHQQGTPRASNKSCAIM) is disordered. Over residues 551–561 (PEEEEEEEEEP) the composition is skewed to acidic residues. The segment covering 573–587 (QQGTPRASNKSCAIM) has biased composition (polar residues). Residue Thr576 is modified to Phosphothreonine. Cys584 is modified (cysteine methyl ester). Cys584 carries S-farnesyl cysteine lipidation. Positions 585–587 (AIM) are cleaved as a propeptide — removed in mature form.

This sequence belongs to the intermediate filament family. As to quaternary structure, homodimer. Lamin dimers then assemble into dimeric head-to-tail polymers. Ultimately, two head-to-tail polymers assemble laterally into a protofilament with a uniformly shaped rod of 3.5 nm in diameter. Interacts with SPAG4 and SEPT12. Post-translationally, B-type lamins undergo a series of modifications, such as farnesylation and phosphorylation. Increased phosphorylation of the lamins occurs before envelope disintegration and probably plays a role in regulating lamin associations. In terms of processing, phosphorylation plays a key role in lamin organization, subcellular localization and nuclear envelope disintegration. Phosphorylation by CDK1 at Ser-23 and Ser-393 at the onset of mitosis drives lamin disassembly and nuclear envelope breakdown.

The protein localises to the nucleus lamina. Functionally, lamins are intermediate filament proteins that assemble into a filamentous meshwork, and which constitute the major components of the nuclear lamina, a fibrous layer on the nucleoplasmic side of the inner nuclear membrane. Lamins provide a framework for the nuclear envelope, bridging the nuclear envelope and chromatin, thereby playing an important role in nuclear assembly, chromatin organization, nuclear membrane and telomere dynamics. The structural integrity of the lamina is strictly controlled by the cell cycle, as seen by the disintegration and formation of the nuclear envelope in prophase and telophase, respectively. The polypeptide is Lamin-B1 (Lmnb1) (Rattus norvegicus (Rat)).